The sequence spans 2092 residues: RNA-directed RNA polymerase L (2092 aa).

The endonuclease stretch occupies residues 18–215 (VPIKHFDCTM…ELSSTDEELG (198 aa)). Mn(2+)-binding residues include histidine 79, aspartate 111, and glutamate 125. Lysine 143 functions as the For endonuclease activity in the catalytic mechanism. The RdRp catalytic domain maps to 975 to 1166 (ARKQCKGPVW…AICFRMKKEL (192 aa)). Aspartate 1134 contributes to the Mg(2+) binding site. Residues 1706-1822 (GAGTVGGFIK…PFGCPVYIIK (117 aa)) form a cap-binding region.

Belongs to the Bunyavirales RNA polymerase family. In terms of assembly, homomultimer. Interacts with glycoprotein N; this interaction allows efficient polymerase packaging into virus particles. Interacts with nucleoprotein N. The cofactor is Mn(2+). It depends on Mg(2+) as a cofactor.

It is found in the host Golgi apparatus. The protein resides in the host endoplasmic reticulum. Its subcellular location is the host endoplasmic reticulum-Golgi intermediate compartment. It localises to the virion. The enzyme catalyses RNA(n) + a ribonucleoside 5'-triphosphate = RNA(n+1) + diphosphate. RNA-dependent RNA polymerase, which is responsible for the replication and transcription of the viral RNA genome using antigenomic RNA as an intermediate. During transcription, synthesizes subgenomic RNAs and assures their capping by a cap-snatching mechanism, which involves the endonuclease activity cleaving the host capped pre-mRNAs. These short capped RNAs are then used as primers for viral transcription. The 3'-end of subgenomic mRNAs molecules are not polyadenylated. During replication, the polymerase binds the 5' and 3' vRNA extremities at distinct sites. In turn, significant conformational changes occur in the polymerase and in vRNA to initiate active RNA synthesis. As a consequence of the use of the same enzyme for both transcription and replication, these mechanisms need to be well coordinated. In Aedes (Bovine), this protein is RNA-directed RNA polymerase L.